A 304-amino-acid chain; its full sequence is N-carbamoyl-D-amino acid hydrolase (304 aa).

The CN hydrolase domain occupies 5–276 (MILAVGQQGP…DEVITAAVCL (272 aa)). Residues E47, K127, and C172 contribute to the active site.

In terms of assembly, homotetramer.

It carries out the reaction an N-carbamoyl-D-amino acid + H2O + 2 H(+) = a D-alpha-amino acid + NH4(+) + CO2. Its activity is regulated as follows. The activity decreases with increasing concentration of H(2)O(2). Has 68% and 43% of activity remaining upon treatment with 0.1 and 0.2 mM H(2)O(2) for 30 minutes, respectively. Inhibited significantly by 2 mM Zn(2+), Cu(2+) and Ag(+), moderately by Co(2+), Mn(2+), Sn(2+) and Mg(2+), and only slightly by Ba(2+). Slightly activated by Fe(2+) and Ca(2+). No effect on activity by metal chelators EDTA and 8-hydroxyquinoline at 2 mM or by dithiothreitol, 2-mercaptoethanol or phenylmethanesulfonyl fluoride. Its function is as follows. Catalyzes the hydrolysis of N-carbamoyl-D-amino acids to the corresponding D-amino acids. Hydrolyzes aromatic and aliphatic N-carbamoyl-D-amino acids in vitro. Effectively hydrolyzes N-carbamoyl-D-p-hydroxyphenylglycine and N-carbamoyl-DL-p-hydroxyphenylglycine, and to a lesser extent N-carbamoyl-D-methionine. No activity for N-carbamoyl-L-amino acids, N-carbamoyl-beta-alanine or (RS)-alpha-ethyl-N-carbamoylphenylglycine in vitro. The chain is N-carbamoyl-D-amino acid hydrolase from Ensifer adhaerens (Sinorhizobium morelense).